The primary structure comprises 433 residues: Oxaloacetate decarboxylase beta chain 2 (433 aa).

9 helical membrane passes run 13–35 (LMHL…WLAI), 42–64 (LLLL…LALT), 125–147 (LFYK…VGAM), 160–182 (LLLG…TLNY), 214–236 (LAPE…VPLI), 266–288 (ILFP…PLLG), 308–327 (TVQN…SVGA), 339–361 (TLGI…VLMA), and 413–432 (VAGV…YVLA).

This sequence belongs to the GcdB/MmdB/OadB family. In terms of assembly, heterotrimer of an alpha, a beta and a gamma subunit. Requires Na(+) as cofactor.

The protein resides in the cell membrane. The catalysed reaction is oxaloacetate + 2 Na(+)(in) + H(+) = pyruvate + 2 Na(+)(out) + CO2. In terms of biological role, catalyzes the decarboxylation of oxaloacetate coupled to Na(+) translocation. In Salmonella typhimurium (strain LT2 / SGSC1412 / ATCC 700720), this protein is Oxaloacetate decarboxylase beta chain 2 (oadB2).